The chain runs to 122 residues: Large ribosomal subunit protein uL14 (122 aa).

It belongs to the universal ribosomal protein uL14 family. In terms of assembly, part of the 50S ribosomal subunit. Forms a cluster with proteins L3 and L19. In the 70S ribosome, L14 and L19 interact and together make contacts with the 16S rRNA in bridges B5 and B8.

Binds to 23S rRNA. Forms part of two intersubunit bridges in the 70S ribosome. The protein is Large ribosomal subunit protein uL14 of Paramagnetospirillum magneticum (strain ATCC 700264 / AMB-1) (Magnetospirillum magneticum).